The following is a 94-amino-acid chain: Ubiquitin-like protein ATG12B (94 aa).

Ala-2 bears the N-acetylalanine mark. A Glycyl lysine isopeptide (Gly-Lys) (interchain with K-128 in ATG5) cross-link involves residue Gly-94.

The protein belongs to the ATG12 family. As to expression, ubiquitous.

It is found in the cytoplasm. Its function is as follows. Ubiquitin-like protein involved in cytoplasm to vacuole transport (Cvt) and autophagy vesicles formation. Conjugation with ATG5 through a ubiquitin-like conjugating system involving also ATG7 as an E1-like activating enzyme and ATG10 as an E2-like conjugating enzyme, is essential for its function. ATG12/ATG5 conjugate has an essential role in plant nutrient recycling. This chain is Ubiquitin-like protein ATG12B (ATG12B), found in Arabidopsis thaliana (Mouse-ear cress).